A 686-amino-acid polypeptide reads, in one-letter code: Mitochondrial Rho GTPase 1 (686 aa).

Topologically, residues 1–648 (MPRRDLVRIV…PAQRIRVVAR (648 aa)) are cytoplasmic. One can recognise a Miro 1 domain in the interval 4–172 (RDLVRIVLVG…FYFAQKAVLH (169 aa)). GTP contacts are provided by residues 13-20 (GDDGVGKS), 59-63 (DTSSN), and 117-120 (NKID). 2 consecutive EF-hand domains span residues 188–223 (KCLEALKRIFTISDVDKDGLLNAHELNQFQQKCFST) and 341–376 (LGNQFLTDIFEAYDKDQDGALSQNELDDLFSTSPGN). Ca(2+)-binding residues include Asp-201, Asp-203, Asp-205, Glu-212, Asp-354, Asp-356, Asp-358, and Glu-365. Residues 455 to 624 (RNVFLCYVLG…WVAITRVALD (170 aa)) form the Miro 2 domain. Residues 464–471 (GATGSGKT), 506–510 (EMEGV), and 574–577 (TKSD) each bind GTP. A helical; Anchor for type IV membrane protein membrane pass occupies residues 649-665 (WGLAATTISAIVAVWMK). Residues 666–686 (WQGYSFKGIWGWMAKFAGLRT) lie on the Mitochondrial intermembrane side of the membrane.

The protein belongs to the mitochondrial Rho GTPase family.

It localises to the mitochondrion outer membrane. Mitochondrial GTPase involved in mitochondrial trafficking. Probably involved in control of anterograde transport of mitochondria and their subcellular distribution. The sequence is that of Mitochondrial Rho GTPase 1 (GEM1) from Cryptococcus neoformans var. neoformans serotype D (strain B-3501A) (Filobasidiella neoformans).